Here is a 397-residue protein sequence, read N- to C-terminus: ATP-dependent RNA helicase eIF4A (397 aa).

The Q motif signature appears at 23-51; that stretch reads YKFDDLNLKPNIVRGIFGYGYETPSAIQQ. In terms of domain architecture, Helicase ATP-binding spans 54-224; sequence ILPITEGRDV…TKFMNNPVRI (171 aa). Residue 67 to 74 coordinates ATP; it reads AQSGTGKT. The DEAD box signature appears at 172-175; that stretch reads DEAD. The region spanning 235–396 is the Helicase C-terminal domain; that stretch reads GIKQFYINVE…EMPADIGALF (162 aa).

This sequence belongs to the DEAD box helicase family. eIF4A subfamily. In terms of assembly, component of the eIF4F complex, which composition varies with external and internal environmental conditions. It is composed of at least eIF4A, eIF4E and eIF4G.

The protein resides in the cytoplasm. It catalyses the reaction ATP + H2O = ADP + phosphate + H(+). In terms of biological role, ATP-dependent RNA helicase which is a subunit of the eIF4F complex involved in cap recognition and is required for mRNA binding to ribosome. In the current model of translation initiation, eIF4A unwinds RNA secondary structures in the 5'-UTR of mRNAs which is necessary to allow efficient binding of the small ribosomal subunit, and subsequent scanning for the initiator codon. The polypeptide is ATP-dependent RNA helicase eIF4A (TIF1) (Candida albicans (strain SC5314 / ATCC MYA-2876) (Yeast)).